The chain runs to 201 residues: Prostamide/prostaglandin F synthase (201 aa).

This sequence belongs to the peroxiredoxin-like PRXL2 family. Prostamide/prostaglandin F synthase subfamily.

It is found in the cytoplasm. The protein resides in the cytosol. It carries out the reaction prostaglandin H2 + [thioredoxin]-dithiol = prostaglandin F2alpha + [thioredoxin]-disulfide. The catalysed reaction is prostamide F2alpha + [thioredoxin]-disulfide = prostamide H2 + [thioredoxin]-dithiol. Catalyzes the reduction of prostaglandin-ethanolamide H(2) (prostamide H(2)) to prostamide F(2alpha) with NADPH as proton donor. Also able to reduce prostaglandin H(2) to prostaglandin F(2alpha). The protein is Prostamide/prostaglandin F synthase (prxl2b) of Danio rerio (Zebrafish).